The chain runs to 189 residues: Peptidyl-tRNA hydrolase (189 aa).

Tyr-15 provides a ligand contact to tRNA. The active-site Proton acceptor is His-20. Residues Phe-66, Asn-68, and Asn-114 each contribute to the tRNA site.

Belongs to the PTH family. In terms of assembly, monomer.

The protein localises to the cytoplasm. The enzyme catalyses an N-acyl-L-alpha-aminoacyl-tRNA + H2O = an N-acyl-L-amino acid + a tRNA + H(+). Its function is as follows. Hydrolyzes ribosome-free peptidyl-tRNAs (with 1 or more amino acids incorporated), which drop off the ribosome during protein synthesis, or as a result of ribosome stalling. Catalyzes the release of premature peptidyl moieties from peptidyl-tRNA molecules trapped in stalled 50S ribosomal subunits, and thus maintains levels of free tRNAs and 50S ribosomes. This Streptococcus pneumoniae (strain Taiwan19F-14) protein is Peptidyl-tRNA hydrolase.